We begin with the raw amino-acid sequence, 199 residues long: Recombination protein RecR (199 aa).

The C4-type zinc finger occupies 58 to 73 (CVNCGNIGTGDLCEIC). The 96-residue stretch at 81–176 (GEICVVEDVA…TLSSLAQGVP (96 aa)) folds into the Toprim domain.

This sequence belongs to the RecR family.

May play a role in DNA repair. It seems to be involved in an RecBC-independent recombinational process of DNA repair. It may act with RecF and RecO. This chain is Recombination protein RecR, found in Jannaschia sp. (strain CCS1).